Here is a 114-residue protein sequence, read N- to C-terminus: Protein D2 (114 aa).

The protein belongs to the phosphatidylethanolamine-binding protein family.

This Onchocerca volvulus protein is Protein D2 (D2).